A 271-amino-acid chain; its full sequence is ATP synthase subunit a (271 aa).

5 helical membrane-spanning segments follow: residues 38 to 58, 100 to 120, 146 to 166, 220 to 240, and 242 to 262; these read FWTL…LFLV, LIAP…LMDL, DVNI…FYSI, LIFI…LNVP, and AIFH…LTIV.

Belongs to the ATPase A chain family. In terms of assembly, F-type ATPases have 2 components, CF(1) - the catalytic core - and CF(0) - the membrane proton channel. CF(1) has five subunits: alpha(3), beta(3), gamma(1), delta(1), epsilon(1). CF(0) has three main subunits: a(1), b(2) and c(9-12). The alpha and beta chains form an alternating ring which encloses part of the gamma chain. CF(1) is attached to CF(0) by a central stalk formed by the gamma and epsilon chains, while a peripheral stalk is formed by the delta and b chains.

It localises to the cell inner membrane. Functionally, key component of the proton channel; it plays a direct role in the translocation of protons across the membrane. In Salmonella choleraesuis (strain SC-B67), this protein is ATP synthase subunit a.